Consider the following 186-residue polypeptide: Elongation factor P (186 aa).

Belongs to the elongation factor P family.

It localises to the cytoplasm. Its pathway is protein biosynthesis; polypeptide chain elongation. Functionally, involved in peptide bond synthesis. Stimulates efficient translation and peptide-bond synthesis on native or reconstituted 70S ribosomes in vitro. Probably functions indirectly by altering the affinity of the ribosome for aminoacyl-tRNA, thus increasing their reactivity as acceptors for peptidyl transferase. In Pelagibacter ubique (strain HTCC1062), this protein is Elongation factor P.